The primary structure comprises 110 residues: Ribonuclease P protein component 1 (110 aa).

The protein belongs to the eukaryotic/archaeal RNase P protein component 1 family. In terms of assembly, consists of a catalytic RNA component and at least 4-5 protein subunits.

The protein resides in the cytoplasm. It carries out the reaction Endonucleolytic cleavage of RNA, removing 5'-extranucleotides from tRNA precursor.. Its function is as follows. Part of ribonuclease P, a protein complex that generates mature tRNA molecules by cleaving their 5'-ends. This Methanosarcina acetivorans (strain ATCC 35395 / DSM 2834 / JCM 12185 / C2A) protein is Ribonuclease P protein component 1.